Here is a 150-residue protein sequence, read N- to C-terminus: Anti-sigma F factor (150 aa).

The protein belongs to the anti-sigma-factor family.

The catalysed reaction is L-seryl-[protein] + ATP = O-phospho-L-seryl-[protein] + ADP + H(+). It catalyses the reaction L-threonyl-[protein] + ATP = O-phospho-L-threonyl-[protein] + ADP + H(+). Functionally, binds to sigma F and blocks its ability to form an RNA polymerase holoenzyme (E-sigma F). Phosphorylates SpoIIAA on a serine residue. This phosphorylation may enable SpoIIAA to act as an anti-anti-sigma factor that counteracts SpoIIAB and thus releases sigma F from inhibition. In Pasteuria penetrans, this protein is Anti-sigma F factor.